Here is a 969-residue protein sequence, read N- to C-terminus: Protein translocase subunit SecA (969 aa).

ATP-binding positions include Q99, 117 to 121 (GEGKT), and D631.

This sequence belongs to the SecA family. In terms of assembly, monomer and homodimer. Part of the essential Sec protein translocation apparatus which comprises SecA, SecYEG and auxiliary proteins SecDF. Other proteins may also be involved.

The protein resides in the cell inner membrane. It is found in the cytoplasm. The catalysed reaction is ATP + H2O + cellular proteinSide 1 = ADP + phosphate + cellular proteinSide 2.. Its function is as follows. Part of the Sec protein translocase complex. Interacts with the SecYEG preprotein conducting channel. Has a central role in coupling the hydrolysis of ATP to the transfer of proteins into and across the cell membrane, serving as an ATP-driven molecular motor driving the stepwise translocation of polypeptide chains across the membrane. This chain is Protein translocase subunit SecA, found in Chlamydia trachomatis serovar D (strain ATCC VR-885 / DSM 19411 / UW-3/Cx).